The following is a 1151-amino-acid chain: SCF E3 ubiquitin ligase complex F-box protein GRR1 (1151 aa).

The segment covering 1 to 18 (MDQDNNNHNDSNRLHPPD) has biased composition (basic and acidic residues). The disordered stretch occupies residues 1–72 (MDQDNNNHND…ATSERNASEV (72 aa)). The span at 38 to 49 (NNNNNNNNNNNN) shows a compositional bias: low complexity. Over residues 58–72 (RTRETATSERNASEV) the composition is skewed to basic and acidic residues. Serine 199 and serine 300 each carry phosphoserine. The 48-residue stretch at 314–361 (VFALNMLPSEILHLILDKLNQKYDIVKFLTVSKLWAEIIVKILYYRPH) folds into the F-box domain. LRR repeat units lie at residues 399-423 (GDYMHDTELNYFVGCKNLERLTLVF), 424-449 (CKHITSVPISAVLRGCKFLQSVDITG), 450-475 (IRDVSDDVFDTLATYCPRVQGFYVPQ), 476-501 (ARNVTFDSLRNFIVHSPMLKRIKITA), 502-527 (NNNMNDELVELLANKCPLLVEVDITL), 528-553 (SPNVTDSSLLKLLTRLVQLREFRITH), 554-582 (NTNITDNLFQELSKVVDDMPSLRLIDLSG), 583-608 (CENITDKTIESIVNLAPKLRNVFLGK), 609-634 (CSRITDASLFQLSKLGKNLQTVHFGH), 635-660 (CFNITDNGVRALFHSCTRIQYVDFAC), 661-685 (CTNLTNRTLYELADLPKLKRIGLVK), 686-714 (CTQMTDEGLLNMVSLRGRNDTLERVHLSY), and 715-740 (CSNLTIYPIYELLMSCPRLSHLSLTA). Residues 1066 to 1080 (AGANDTSNNETNNGN) show a composition bias toward low complexity. Disordered stretches follow at residues 1066–1090 (AGANDTSNNETNNGNDDNETENPNF) and 1118–1151 (VRNNNNNTIDESMPDTAIDSQMDEASGTPDEDML).

As to quaternary structure, interacts with SKP1. Component of the probable SCF(GRR1) complex containing CDC53, SKP1, RBX1 and GRR1.

It localises to the membrane. The protein operates within protein modification; protein ubiquitination. Functionally, substrate recognition component of a SCF (SKP1-CUL1-F-box protein) E3 ubiquitin-protein ligase complex which mediates the ubiquitination and subsequent proteasomal degradation of target proteins. Recognizes and directs ubiquitination of phosphorylated CLN1, CLN2 and GIC2. Probably constitutes the primary response element required for the generation or interpretation of the signal that induces glucose repression. This is SCF E3 ubiquitin ligase complex F-box protein GRR1 (GRR1) from Saccharomyces cerevisiae (strain ATCC 204508 / S288c) (Baker's yeast).